We begin with the raw amino-acid sequence, 124 residues long: MPTIKQLIRNTRQPIRNVTKSPALRGCPQRRGTCTRVYSTITPKKPNSALRKVARVRLTSGFEITAYIPGIGHNLQEHSVVLVRGGRVKDLPGVRYHIVRGTLDAVGVKDRQQGRSKYGVKKPK.

Belongs to the universal ribosomal protein uS12 family. As to quaternary structure, part of the 30S ribosomal subunit.

It is found in the plastid. Its subcellular location is the chloroplast. Its function is as follows. With S4 and S5 plays an important role in translational accuracy. Located at the interface of the 30S and 50S subunits. This Olimarabidopsis pumila (Dwarf rocket) protein is Small ribosomal subunit protein uS12cy (rps12-B).